The chain runs to 131 residues: CLAVATA3/ESR (CLE)-related protein ESR1 (131 aa).

The N-terminal stretch at 1–26 (MASRMGMVAIVSLFVCALAASTSVNA) is a signal peptide. The tract at residues 49-131 (RQQQQGGFIG…IGPPPLSDRY (83 aa)) is disordered. A hydroxyproline mark is found at P81 and P84. Residue P84 is glycosylated (O-linked (Ara...) hydroxyproline).

It belongs to the CLV3/ESR signal peptide family. The O-glycosylation (arabinosylation) of the hydroxyproline Pro-84 enhances binding affinity of the ESR1p peptide for its receptor. As to expression, seed endosperm.

The protein resides in the secreted. It is found in the extracellular space. Extracellular signal peptide that regulates cell fate. This chain is CLAVATA3/ESR (CLE)-related protein ESR1, found in Zea mays (Maize).